The chain runs to 140 residues: L-fucose mutarotase (140 aa).

Catalysis depends on His22, which acts as the Proton donor. Residues Asp30, Arg107, and 129 to 131 contribute to the substrate site; that span reads YGN.

This sequence belongs to the RbsD / FucU family. FucU mutarotase subfamily. In terms of assembly, homodecamer.

It is found in the cytoplasm. It carries out the reaction alpha-L-fucose = beta-L-fucose. The protein operates within carbohydrate metabolism; L-fucose metabolism. Its function is as follows. Involved in the anomeric conversion of L-fucose. This Klebsiella pneumoniae (strain 342) protein is L-fucose mutarotase.